Here is a 429-residue protein sequence, read N- to C-terminus: Cyclin-B2-3 (429 aa).

Residues 86–101 show a composition bias toward basic and acidic residues; sequence ADHKPHIRDEETKKPD. A disordered region spans residues 86–109; it reads ADHKPHIRDEETKKPDSVSSEEPE.

The protein belongs to the cyclin family. Cyclin AB subfamily.

The protein is Cyclin-B2-3 (CYCB2-3) of Arabidopsis thaliana (Mouse-ear cress).